The following is a 451-amino-acid chain: Phosphoglucosamine mutase (451 aa).

S101 acts as the Phosphoserine intermediate in catalysis. Mg(2+)-binding residues include S101, D243, D245, and D247. S101 is subject to Phosphoserine.

It belongs to the phosphohexose mutase family. Mg(2+) is required as a cofactor. Activated by phosphorylation.

The enzyme catalyses alpha-D-glucosamine 1-phosphate = D-glucosamine 6-phosphate. Its function is as follows. Catalyzes the conversion of glucosamine-6-phosphate to glucosamine-1-phosphate. The chain is Phosphoglucosamine mutase from Geobacter metallireducens (strain ATCC 53774 / DSM 7210 / GS-15).